The following is a 165-amino-acid chain: Destrin (165 aa).

The residue at position 2 (Ala2) is an N-acetylalanine. Phosphoserine is present on Ser3. The 150-residue stretch at 4-153 folds into the ADF-H domain; sequence GVQVADEVCR…NRTSIAEKLG (150 aa). N6-acetyllysine is present on Lys19. Positions 30–34 match the Nuclear localization signal motif; the sequence is KKRKK.

This sequence belongs to the actin-binding proteins ADF family. ISGylated.

Its function is as follows. Actin-depolymerizing protein. Severs actin filaments (F-actin) and binds to actin monomers (G-actin). Acts in a pH-independent manner. In Rattus norvegicus (Rat), this protein is Destrin (Dstn).